The following is a 766-amino-acid chain: Signal transducer and activator of transcription 3.2 (766 aa).

The Essential for nuclear import signature appears at 150–162; that stretch reads DVRKKVQDLEQKM. The SH2 domain maps to 580-670; it reads WNEGYIIGFI…DATNILVSPL (91 aa). Ser-725 bears the Phosphoserine; by NLK mark.

Belongs to the transcription factor STAT family. In terms of assembly, forms a homodimer or a heterodimer with a related family member. Interacts with nlk.2. Post-translationally, phosphorylation of both tyrosine and serine residues, together with dimerization, is required for mesoderm induction.

It is found in the cytoplasm. It localises to the nucleus. Functionally, transcription factor that binds to target promoter sequences and activates transcription upon il6st/gp130 stimulation. Mediates ventralization of embryos, at least in part via inhibition of smad2 signaling. Required for hairy2 to induce dll1/delta1 and promote neural crest cell proliferation and differentiation. Involved in TGFbeta-mediated mesoderm induction in early embryos, acting downstream of map3k7/tak1 and nlk.2. The sequence is that of Signal transducer and activator of transcription 3.2 (stat3.2) from Xenopus laevis (African clawed frog).